Consider the following 173-residue polypeptide: Large ribosomal subunit protein bL17 (173 aa).

A disordered region spans residues 136–173; it reads AEEEAPAVEAEATEATEAPVEEAAAVEAEAPADAEKAE. Residues 138–149 are compositionally biased toward acidic residues; sequence EEAPAVEAEATE. The span at 150 to 166 shows a compositional bias: low complexity; sequence ATEAPVEEAAAVEAEAP.

Belongs to the bacterial ribosomal protein bL17 family. Part of the 50S ribosomal subunit. Contacts protein L32.

The sequence is that of Large ribosomal subunit protein bL17 from Bifidobacterium longum subsp. infantis (strain ATCC 15697 / DSM 20088 / JCM 1222 / NCTC 11817 / S12).